The chain runs to 127 residues: Protein chibby homolog 1 (127 aa).

The segment covering 1 to 10 (MPLFGSTFSP) has biased composition (polar residues). The tract at residues 1–26 (MPLFGSTFSPKKTPPRKSASLSNLHN) is disordered. A phosphoserine mark is found at Ser9 and Ser20. The minimal region for the interaction with PKD2 stretch occupies residues 60-112 (IAETGISGGVDRREAQRLRRRNQQLEEENNLLRLKVDILLDMLSETTAESHLM). Residues 68 to 125 (GVDRREAQRLRRRNQQLEEENNLLRLKVDILLDMLSETTAESHLMEKELDELKSVSRR) adopt a coiled-coil conformation. The segment at 77-98 (LRRRNQQLEEENNLLRLKVDIL) is leucine-zipper; mediates homodimerization.

This sequence belongs to the chibby family. As to quaternary structure, homodimer. Homodimerization is essential for nuclear localization and interaction with KPNA4 but is dispensable for interaction with CTNNB1. Interacts with polycystin-2/PKD2 and GM130. Interacts with the C-terminal region of CTNNB1. Interacts (C-terminus) with TCIM (C-terminus), TCIM competes with CTNNB1 for the interaction with CBY1. Interacts with FAM92A; this interaction facilitates targeting of FAM92A to cilium basal body. Interacts with CIBAR2. Interacts with KPNA4.

The protein resides in the nucleus speckle. It localises to the cytoplasm. Its subcellular location is the cytoskeleton. The protein localises to the cilium basal body. It is found in the microtubule organizing center. The protein resides in the centrosome. It localises to the centriole. Its subcellular location is the golgi apparatus. The protein localises to the trans-Golgi network. It is found in the cell projection. The protein resides in the cilium. It localises to the flagellum. Its subcellular location is the nucleus. Inhibits the Wnt/Wingless pathway by binding to CTNNB1/beta-catenin and inhibiting beta-catenin-mediated transcriptional activation through competition with TCF/LEF transcription factors. Has also been shown to play a role in regulating the intracellular trafficking of polycystin-2/PKD2 and possibly of other intracellular proteins. Promotes adipocyte and cardiomyocyte differentiation. This Bos taurus (Bovine) protein is Protein chibby homolog 1 (CBY1).